The chain runs to 936 residues: VPS35 endosomal protein-sorting factor-like (936 aa).

Disordered regions lie at residues S43–L69 and D87–D113. Over residues K51–L69 the composition is skewed to low complexity. A Phosphoserine modification is found at S265. The chain crosses the membrane as a helical span at residues A672–F692.

This sequence belongs to the VPS35L family. Component of the heterotrimeric retriever complex formed by VPS26C, VPS29 and VPS35L. Interacts with VPS29. Interacts with COMMD1, CCDC93 and CCDC22; associates with the CCC (COMMD/CCDC22/CCDC93) complex which contains at least COMMD1 (and possibly other COMM domain-containing proteins), CCDC22 and CCDC93. Interacts with WASHC1, WASHC2A and WASHC2C. Interacts with SNX17 and SNX31.

The protein localises to the membrane. The protein resides in the endosome. In terms of biological role, acts as a component of the retriever complex. The retriever complex is a heterotrimeric complex related to retromer cargo-selective complex (CSC) and essential for retromer-independent retrieval and recycling of numerous cargos such as integrin alpha-5/beta-1 (ITGA5:ITGB1). The recruitment of the retriever complex to the endosomal membrane involves CCC and WASH complexes. In the endosomes, drives the retrieval and recycling of NxxY-motif-containing cargo proteins by coupling to SNX17, a cargo essential for the homeostatic maintenance of numerous cell surface proteins associated with processes that include cell migration, cell adhesion, nutrient supply and cell signaling. Involved in copper-dependent ATP7A trafficking between the trans-Golgi network and vesicles in the cell periphery; the function is proposed to depend on its association with the CCC complex and cooperation with the WASH complex on early endosomes. Seems not to be required for CCC complex stability. The polypeptide is VPS35 endosomal protein-sorting factor-like (Rattus norvegicus (Rat)).